Reading from the N-terminus, the 165-residue chain is E3 ubiquitin-protein ligase RNF181 (165 aa).

The RING-type; atypical zinc finger occupies 88-129 (CPVCLLEFEAEETVIEMPCHHLFHSNCILPWLSKTNSCPLCR). The disordered stretch occupies residues 136 to 165 (DDSYEEHKKDKARRQQQQHRLENLHGAMYT). Threonine 165 is subject to Phosphothreonine.

This sequence belongs to the RNF181 family. In terms of assembly, directly interacts with ITGA2B and, as a result, with integrin ITGA2B/ITGB3. There is no evidence that integrin ITGA2B/ITGB3 is an endogenous substrate for RNF181-directed ubiquitination. Post-translationally, auto-ubiquitinated as part of the enzymatic reaction.

It catalyses the reaction S-ubiquitinyl-[E2 ubiquitin-conjugating enzyme]-L-cysteine + [acceptor protein]-L-lysine = [E2 ubiquitin-conjugating enzyme]-L-cysteine + N(6)-ubiquitinyl-[acceptor protein]-L-lysine.. It participates in protein modification; protein ubiquitination. In terms of biological role, E3 ubiquitin-protein ligase which accepts ubiquitin from an E2 ubiquitin-conjugating enzyme in the form of a thioester and then directly transfers the ubiquitin to targeted substrates. Catalyzes monoubiquitination of 26S proteasome subunit PSMC2/RPT1. This Mus musculus (Mouse) protein is E3 ubiquitin-protein ligase RNF181.